We begin with the raw amino-acid sequence, 238 residues long: 2,3,4,5-tetrahydropyridine-2,6-dicarboxylate N-acetyltransferase (238 aa).

This sequence belongs to the transferase hexapeptide repeat family. DapH subfamily.

The catalysed reaction is (S)-2,3,4,5-tetrahydrodipicolinate + acetyl-CoA + H2O = L-2-acetamido-6-oxoheptanedioate + CoA. Its pathway is amino-acid biosynthesis; L-lysine biosynthesis via DAP pathway; LL-2,6-diaminopimelate from (S)-tetrahydrodipicolinate (acetylase route): step 1/3. In terms of biological role, catalyzes the transfer of an acetyl group from acetyl-CoA to tetrahydrodipicolinate. This is 2,3,4,5-tetrahydropyridine-2,6-dicarboxylate N-acetyltransferase from Thermotoga neapolitana (strain ATCC 49049 / DSM 4359 / NBRC 107923 / NS-E).